We begin with the raw amino-acid sequence, 440 residues long: Gap junction alpha-8 protein (440 aa).

An intramembrane segment occupies 2–12; sequence GDWSFLGNILE. At 13-21 the chain is on the cytoplasmic side; it reads EVNEHSTVI. A helical membrane pass occupies residues 22–42; that stretch reads GRVWLTVLFIFRILILGTAAE. The Extracellular portion of the chain corresponds to 43–71; the sequence is FVWGDEQSDFVCNTQQPGCENVCYDEAFP. 3 disulfides stabilise this stretch: Cys-54-Cys-201, Cys-61-Cys-195, and Cys-65-Cys-190. A helical membrane pass occupies residues 72–92; the sequence is ISHIRLWVLQIIFVSTPSLMY. The Cytoplasmic segment spans residues 93–161; the sequence is VGHAVHHVRM…GTLLRTYVCH (69 aa). The interval 111 to 143 is disordered; sequence AEELCQQSRSNGGERVPIAPDQASIRKSSSSSK. The chain crosses the membrane as a helical span at residues 162–182; it reads IIFKTLFEVGFIVGHYFLYGF. Topologically, residues 183-210 are extracellular; the sequence is RILPLYRCSRWPCPNVVDCFVSRPTEKT. Residues 211 to 231 form a helical membrane-spanning segment; that stretch reads IFILFMLSVAFVSLFLNIMEM. Topologically, residues 232 to 440 are cytoplasmic; sequence SHLGMKGIRS…SRARSDDLTI (209 aa). Residues 338–440 are disordered; sequence VEREEPPIEE…SRARSDDLTI (103 aa). Basic and acidic residues-rich tracts occupy residues 353-364 and 374-399; these read VGEKKQEAEKVA and PDRE…EKVT. The segment covering 423 to 432 has biased composition (low complexity); the sequence is LSRLSKASSR.

The protein belongs to the connexin family. Alpha-type (group II) subfamily. As to quaternary structure, a hemichannel or connexon is composed of a hexamer of connexins. A functional gap junction is formed by the apposition of two hemichannels. Forms heteromeric channels with GJA3. As to expression, detected in eye lens (at protein level). Eye lens.

The protein localises to the cell membrane. The protein resides in the cell junction. It localises to the gap junction. In terms of biological role, structural component of eye lens gap junctions. Gap junctions are dodecameric channels that connect the cytoplasm of adjoining cells. They are formed by the docking of two hexameric hemichannels, one from each cell membrane. Small molecules and ions diffuse from one cell to a neighboring cell via the central pore. The sequence is that of Gap junction alpha-8 protein (Gja8) from Mus musculus (Mouse).